A 153-amino-acid chain; its full sequence is Small ribosomal subunit protein eS19 (153 aa).

Belongs to the eukaryotic ribosomal protein eS19 family. In terms of assembly, part of the 30S ribosomal subunit.

In terms of biological role, may be involved in maturation of the 30S ribosomal subunit. In Aeropyrum pernix (strain ATCC 700893 / DSM 11879 / JCM 9820 / NBRC 100138 / K1), this protein is Small ribosomal subunit protein eS19.